We begin with the raw amino-acid sequence, 1064 residues long: DNA-directed RNA polymerase subunit beta (1064 aa).

Belongs to the RNA polymerase beta chain family. As to quaternary structure, in plastids the minimal PEP RNA polymerase catalytic core is composed of four subunits: alpha, beta, beta', and beta''. When a (nuclear-encoded) sigma factor is associated with the core the holoenzyme is formed, which can initiate transcription.

It localises to the plastid. The protein localises to the chloroplast. It carries out the reaction RNA(n) + a ribonucleoside 5'-triphosphate = RNA(n+1) + diphosphate. DNA-dependent RNA polymerase catalyzes the transcription of DNA into RNA using the four ribonucleoside triphosphates as substrates. The protein is DNA-directed RNA polymerase subunit beta of Jasminum nudiflorum (Winter jasmine).